Reading from the N-terminus, the 342-residue chain is Phosphoribosylformylglycinamidine cyclo-ligase (342 aa).

It belongs to the AIR synthase family.

It is found in the cytoplasm. It carries out the reaction 2-formamido-N(1)-(5-O-phospho-beta-D-ribosyl)acetamidine + ATP = 5-amino-1-(5-phospho-beta-D-ribosyl)imidazole + ADP + phosphate + H(+). Its pathway is purine metabolism; IMP biosynthesis via de novo pathway; 5-amino-1-(5-phospho-D-ribosyl)imidazole from N(2)-formyl-N(1)-(5-phospho-D-ribosyl)glycinamide: step 2/2. The sequence is that of Phosphoribosylformylglycinamidine cyclo-ligase from Staphylococcus aureus (strain MRSA252).